Here is a 201-residue protein sequence, read N- to C-terminus: MSHDANTIDSRTHEGELNKLGFWIFLTAEFALFGTLFATLLTLQHGGGYGGKLTTDLFELHLILIMTFALLISSYTCGIAIYYMRQEKQNLMMFWMIITVILGLVFVGFEIYEFAHYASEGVNPTIGSFWSSFFILLGTHGAHVSLGIVWVICLLIQIGTRGLDSYNAPKLFIVSLYWHFLDVVWVFIFTAVYMIGMVYSG.

5 helical membrane passes run 20-40, 62-82, 91-111, 133-153, and 172-192; these read LGFW…FATL, LILI…IAIY, LMMF…GFEI, FFIL…WVIC, and FIVS…FTAV.

Belongs to the cytochrome c oxidase subunit 3 family.

The protein resides in the cell membrane. The enzyme catalyses 2 a quinol + O2 = 2 a quinone + 2 H2O. Catalyzes quinol oxidation with the concomitant reduction of oxygen to water. This is Probable quinol oxidase subunit 3 (qoxC) from Staphylococcus epidermidis (strain ATCC 35984 / DSM 28319 / BCRC 17069 / CCUG 31568 / BM 3577 / RP62A).